The chain runs to 303 residues: ATP phosphoribosyltransferase (303 aa).

It belongs to the ATP phosphoribosyltransferase family. Long subfamily. Mg(2+) is required as a cofactor.

The protein resides in the cytoplasm. The catalysed reaction is 1-(5-phospho-beta-D-ribosyl)-ATP + diphosphate = 5-phospho-alpha-D-ribose 1-diphosphate + ATP. Its pathway is amino-acid biosynthesis; L-histidine biosynthesis; L-histidine from 5-phospho-alpha-D-ribose 1-diphosphate: step 1/9. Feedback inhibited by histidine. Its function is as follows. Catalyzes the condensation of ATP and 5-phosphoribose 1-diphosphate to form N'-(5'-phosphoribosyl)-ATP (PR-ATP). Has a crucial role in the pathway because the rate of histidine biosynthesis seems to be controlled primarily by regulation of HisG enzymatic activity. The sequence is that of ATP phosphoribosyltransferase from Haemophilus influenzae (strain PittGG).